The following is a 271-amino-acid chain: NH(3)-dependent NAD(+) synthetase (271 aa).

Residue 43–50 (GISGGQDS) participates in ATP binding. Asp-49 provides a ligand contact to Mg(2+). Arg-137 contacts deamido-NAD(+). Thr-157 provides a ligand contact to ATP. Glu-162 provides a ligand contact to Mg(2+). Positions 170 and 177 each coordinate deamido-NAD(+). ATP is bound by residues Lys-186 and Thr-208. 257–258 (HK) provides a ligand contact to deamido-NAD(+).

It belongs to the NAD synthetase family. As to quaternary structure, homodimer.

The catalysed reaction is deamido-NAD(+) + NH4(+) + ATP = AMP + diphosphate + NAD(+) + H(+). Its pathway is cofactor biosynthesis; NAD(+) biosynthesis; NAD(+) from deamido-NAD(+) (ammonia route): step 1/1. Functionally, catalyzes the ATP-dependent amidation of deamido-NAD to form NAD. Uses ammonia as a nitrogen source. This chain is NH(3)-dependent NAD(+) synthetase, found in Exiguobacterium sp. (strain ATCC BAA-1283 / AT1b).